A 1499-amino-acid chain; its full sequence is Multidrug resistance protein CDR2 (1499 aa).

The Cytoplasmic portion of the chain corresponds to 1–511 (MSTANTSLSQ…NFLRMKGDPS (511 aa)). Residues 148 to 402 (FTTEAINKLK…FENMGWKCPQ (255 aa)) enclose the ABC transporter 1 domain. 6 consecutive transmembrane segments (helical) span residues 512–532 (IPLI…SVFF), 546–566 (GALF…ILSL), 596–616 (LPVK…MVNL), 621–641 (GNFF…SHMF), 660–680 (VFLL…YILG), and 763–783 (FGIT…LTEF). At 784-1193 (NKGAMQKGEI…TIVQDWRSPG (410 aa)) the chain is on the cytoplasmic side. Residues 857–1101 (FFWRDLTYQV…MINYFEKYGA (245 aa)) enclose the ABC transporter 2 domain. 893 to 900 (GASGAGKT) is a binding site for ATP. The next 6 helical transmembrane spans lie at 1194–1214 (YIYS…FSFF), 1229–1249 (AVFM…PYFV), 1279–1299 (IPFQ…PVGL), 1315–1335 (LMWM…QLAI), 1354–1374 (LCLM…FWIF), and 1465–1485 (FGIF…FYWL).

The protein belongs to the ABC transporter superfamily. ABCG family. PDR (TC 3.A.1.205) subfamily.

It localises to the membrane. Multidrug efflux transporter. Confers resistance to azole antifungal agents, to other antifungals (terbinafine, amorolfine) and to a variety of metabolic inhibitors. The sequence is that of Multidrug resistance protein CDR2 (CDR2) from Candida albicans (strain SC5314 / ATCC MYA-2876) (Yeast).